A 1317-amino-acid chain; its full sequence is MASVKVAVRVRPMNRREKDLEAKFIIQMEKSKTTITNLKIPEGGTGDSGRERTKTFTYDFSFYSADTKSPDYVSQEMVFKTLGTDVVKSAFEGYNACVFAYGQTGSGKSYTMMGNSGDSGLIPRICEGLFSRINETTRWDEASFRTEVSYLEIYNERVRDLLRRKSSKTFNLRVREHPKEGPYVEDLSKHLVQNYGDVEELMDAGNINRTTAATGMNDVSSRSHAIFTIKFTQAKFDSEMPCETVSKIHLVDLAGSERADATGATGVRLKEGGNINKSLVTLGNVISALADLSQDAANTLAKKKQVFVPYRDSVLTWLLKDSLGGNSKTIMIATISPADVNYGETLSTLRYANRAKNIINKPTINEDANVKLIRELRAEIARLKTLLAQGNQIALLDSPTALSMEEKLQQNEARVQELTKEWTNKWNETQNILKEQTLALRKEGIGVVLDSELPHLIGIDDDLLSTGIILYHLKEGQTYVGRDDASTEQDIVLHGLDLESEHCIFENIGGTVTLIPLSGSQCSVNGVQIVEATHLNQGAVILLGRTNMFRFNHPKEAAKLREKRKSGLLSSFSLSMTDLSKSRENLSAVMLYNPGLEFERQQREELEKLESKRKLIEEMEEKQKSDKAELERMQQEVETQRKETEIVQLQIRKQEESLKRRSFHIENKLKDLLAEKEKFEEERLREQQEIELQKKRQEEETFLRVQEELQRLKELNNNEKAEKFQIFQELDQLQKEKDEQYAKLELEKKRLEEQEKEQVMLVAHLEEQLREKQEMIQLLRRGEVQWVEEEKRDLEGIRESLLRVKEARAGGDEDGEELEKAQLRFFEFKRRQLVKLVNLEKDLVQQKDILKKEVQEEQEILECLKCEHDKESRLLEKHDESVTDVTEVPQDFEKIKPVEYRLQYKERQLQYLLQNHLPTLLEEKQRAFEILDRGPLSLDNTLYQVEKEMEEKEEQLAQYQANANQLQKLQATFEFTANIARQEEKVRKKEKEILESREKQQREALERALARLERRHSALQRHSTLGMEIEEQRQKLASLNSGSREQSGLQASLEAEQEALEKDQERLEYEIQQLKQKIYEVDGVQKDHHGTLEGKVASSSLPVSAEKSHLVPLMDARINAYIEEEVQRRLQDLHRVISEGCSTSADTMKDNEKLHNGTIQRKLKYERMVSRSLGANPDDLKDPIKISIPRYVLCGQGKDAHFEFEVKITVLDETWTVFRRYSRFREMHKTLKLKYAELAALEFPPKKLFGNKDERVIAERRSHLEKYLRDFFSVMLQSATSPLHINKVGLTLSKHTICEFSPFFKKGVFDYSSHGTG.

Positions Ser3–Ile358 constitute a Kinesin motor domain. Gly102–Ser109 lines the ATP pocket. Residues Val370 to Lys425 adopt a coiled-coil conformation. Residue Ser398 is modified to Phosphoserine. An FHA domain is found at Thr478 to Ile529. A Phosphothreonine modification is found at Thr577. Residue Ser582 is modified to Phosphoserine. Coiled coils occupy residues Gly595–Val882 and Leu936–Asp1087. Residues Leu1036–Gly1048 show a composition bias toward polar residues. The tract at residues Leu1036 to Gln1057 is disordered. The residue at position 1052 (Ser1052) is a Phosphoserine. The PX domain maps to Asp1182–Thr1296.

Belongs to the TRAFAC class myosin-kinesin ATPase superfamily. Kinesin family. Interacts with RAB14. Interacts with PTPN21. Primarily expressed in brain. Also present in kidney, liver, intestine, placenta, leukocytes, heart and skeletal muscle (at protein level).

The protein localises to the cytoplasm. The protein resides in the cytoskeleton. It is found in the early endosome membrane. It localises to the spindle. Functionally, plus end-directed microtubule-dependent motor protein involved in endosome transport and receptor recycling and degradation. Regulates the plus end motility of early endosomes and the balance between recycling and degradation of receptors such as EGF receptor (EGFR) and FGF receptor (FGFR). Regulates the Golgi to endosome transport of FGFR-containing vesicles during early development, a key process for developing basement membrane and epiblast and primitive endoderm lineages during early postimplantation development. In Homo sapiens (Human), this protein is Kinesin-like protein KIF16B (KIF16B).